The primary structure comprises 260 residues: Pyridoxine 5'-phosphate synthase (260 aa).

Residues N7 and R18 each coordinate 3-amino-2-oxopropyl phosphate. Residue H43 is the Proton acceptor of the active site. R45 and H50 together coordinate 1-deoxy-D-xylulose 5-phosphate. E83 serves as the catalytic Proton acceptor. T113 lines the 1-deoxy-D-xylulose 5-phosphate pocket. Residue H208 is the Proton donor of the active site. 3-amino-2-oxopropyl phosphate is bound by residues D209 and 230 to 231; that span reads GH.

Belongs to the PNP synthase family. In terms of assembly, homooctamer; tetramer of dimers.

It is found in the cytoplasm. It carries out the reaction 3-amino-2-oxopropyl phosphate + 1-deoxy-D-xylulose 5-phosphate = pyridoxine 5'-phosphate + phosphate + 2 H2O + H(+). It participates in cofactor biosynthesis; pyridoxine 5'-phosphate biosynthesis; pyridoxine 5'-phosphate from D-erythrose 4-phosphate: step 5/5. Its function is as follows. Catalyzes the complicated ring closure reaction between the two acyclic compounds 1-deoxy-D-xylulose-5-phosphate (DXP) and 3-amino-2-oxopropyl phosphate (1-amino-acetone-3-phosphate or AAP) to form pyridoxine 5'-phosphate (PNP) and inorganic phosphate. The chain is Pyridoxine 5'-phosphate synthase from Leptospira biflexa serovar Patoc (strain Patoc 1 / Ames).